A 168-amino-acid chain; its full sequence is uncharacterized protein (168 aa).

The next 4 membrane-spanning stretches (helical) occupy residues 1–21 (MFWL…AVAR), 41–61 (PYII…VLLM), 68–88 (WWLG…WALC), and 123–143 (VILE…MCLF).

The protein localises to the cell membrane. This is an uncharacterized protein from Bacillus subtilis (strain 168).